The following is a 463-amino-acid chain: Glycine--tRNA ligase (463 aa).

The substrate site is built by Arg98 and Glu174. ATP-binding positions include 206–208, 216–221, 290–291, and 334–337; these read RNE, FRTREF, EL, and GADR. Substrate is bound at residue 221–225; sequence FEQME. Residue 330-334 coordinates substrate; that stretch reads EPSLG.

It belongs to the class-II aminoacyl-tRNA synthetase family. In terms of assembly, homodimer.

It localises to the cytoplasm. It catalyses the reaction tRNA(Gly) + glycine + ATP = glycyl-tRNA(Gly) + AMP + diphosphate. Catalyzes the attachment of glycine to tRNA(Gly). The polypeptide is Glycine--tRNA ligase (Staphylococcus haemolyticus (strain JCSC1435)).